A 434-amino-acid chain; its full sequence is MQVSVETTQGLGRRVTITVPAADIQKAVDSELKKAAKTVRIDGFRKGHVPMSMVKQRYGMSVLNDVLGDLMQRNFINAIIENKVNPVGAPDYKPEQYKEGEDFVYSVEFEVFPEIELKDLESIEVVKPIVTVKDEDVDNMLETLRKQQAEWKDKEGEVAAEDRVTVDFNGSIDGEEFEGGKAEDFVLAMGQGRMIPGFEEGLIGHKAGEEFTIDVTFPEDYHAENLKGKKAQFAINLKKVEERELPELTEEFIKRFGIADGSVDGLRAEVRKNMERELKNAIRTRVKSQVIDGLVKANEVDVPAAAVDSEIEVLQRQAAQRFGGDEKQALQLPRELFEEQAKRRVIVGLLLGEVINSNELKAEDERVKALIDEMASAYEDPSEVVEFYNKNEQLMNNIRNLALEEQAVEKILATAKVTEKETNFTELMNEVQMG.

In terms of domain architecture, PPIase FKBP-type spans 161-246 (EDRVTVDFNG…LKKVEERELP (86 aa)).

This sequence belongs to the FKBP-type PPIase family. Tig subfamily.

Its subcellular location is the cytoplasm. It catalyses the reaction [protein]-peptidylproline (omega=180) = [protein]-peptidylproline (omega=0). Its function is as follows. Involved in protein export. Acts as a chaperone by maintaining the newly synthesized protein in an open conformation. Functions as a peptidyl-prolyl cis-trans isomerase. The chain is Trigger factor from Proteus mirabilis (strain HI4320).